Consider the following 155-residue polypeptide: Ribosomal RNA large subunit methyltransferase H (155 aa).

Residues Leu-73, Gly-104, and 123-128 (LSPLTL) contribute to the S-adenosyl-L-methionine site.

The protein belongs to the RNA methyltransferase RlmH family. In terms of assembly, homodimer.

The protein resides in the cytoplasm. The enzyme catalyses pseudouridine(1915) in 23S rRNA + S-adenosyl-L-methionine = N(3)-methylpseudouridine(1915) in 23S rRNA + S-adenosyl-L-homocysteine + H(+). Functionally, specifically methylates the pseudouridine at position 1915 (m3Psi1915) in 23S rRNA. This is Ribosomal RNA large subunit methyltransferase H from Azotobacter vinelandii (strain DJ / ATCC BAA-1303).